Reading from the N-terminus, the 467-residue chain is D-hydantoinase (467 aa).

3 residues coordinate Zn(2+): H65, H67, and K156. K156 bears the N6-carboxylysine mark. Y161 contributes to the substrate binding site. Zn(2+)-binding residues include H189 and H245. Position 294 (S294) interacts with substrate. D321 lines the Zn(2+) pocket. Substrate is bound at residue N343.

It belongs to the metallo-dependent hydrolases superfamily. Hydantoinase/dihydropyrimidinase family. In terms of assembly, homotetramer. It depends on Zn(2+) as a cofactor. In terms of processing, carboxylation allows a single lysine to coordinate two zinc ions.

Catalyzes the stereospecific hydrolysis of the cyclic amide bond of D-hydantoin derivatives. The sequence is that of D-hydantoinase (hyuA) from Streptomyces coelicolor (strain ATCC BAA-471 / A3(2) / M145).